Consider the following 451-residue polypeptide: Trigger factor (451 aa).

Positions 173 to 258 (GDRVTLDFVG…LKKIEWAHLP (86 aa)) constitute a PPIase FKBP-type domain.

The protein belongs to the FKBP-type PPIase family. Tig subfamily.

It localises to the cytoplasm. It catalyses the reaction [protein]-peptidylproline (omega=180) = [protein]-peptidylproline (omega=0). In terms of biological role, involved in protein export. Acts as a chaperone by maintaining the newly synthesized protein in an open conformation. Functions as a peptidyl-prolyl cis-trans isomerase. The polypeptide is Trigger factor (Cupriavidus necator (strain ATCC 17699 / DSM 428 / KCTC 22496 / NCIMB 10442 / H16 / Stanier 337) (Ralstonia eutropha)).